The chain runs to 344 residues: Beta-1,4-galactosyltransferase 4 (344 aa).

Residues 1–12 (MGCNPPYLLSYR) are Cytoplasmic-facing. A helical; Signal-anchor for type II membrane protein transmembrane segment spans residues 13 to 38 (LRLLLLFTLCLTVLGWATSNYFVGAI). The Lumenal segment spans residues 39-344 (QVIPRAKNFM…NITVDFWTAA (306 aa)). A disulfide bridge links Cys-77 with Cys-118. Residues 129–133 (PHRNR), 168–170 (FNR), and 195–196 (VD) each bind UDP-alpha-D-galactose. The cysteines at positions 189 and 208 are disulfide-linked. Residue Asp-196 coordinates Mn(2+). Asn-220 carries N-linked (GlcNAc...) asparagine glycosylation. Tyr-224 and Trp-256 together coordinate UDP-alpha-D-galactose. Residue 258 to 261 (GEDD) participates in N-acetyl-D-glucosamine binding. Position 289 (His-289) interacts with Mn(2+). 289 to 291 (HTR) is a UDP-alpha-D-galactose binding site. N-acetyl-D-glucosamine is bound at residue Arg-301. Residue Asn-335 is glycosylated (N-linked (GlcNAc...) asparagine).

It belongs to the glycosyltransferase 7 family. In terms of assembly, interacts with SLC35A2/UGT1. It depends on Mn(2+) as a cofactor.

Its subcellular location is the golgi apparatus membrane. It localises to the secreted. The enzyme catalyses N-acetyl-D-glucosamine + UDP-alpha-D-galactose = beta-D-galactosyl-(1-&gt;4)-N-acetyl-D-glucosamine + UDP + H(+). The catalysed reaction is a beta-D-GlcNAc-(1-&gt;3)-beta-D-Gal-(1-&gt;4)-beta-D-Glc-(1&lt;-&gt;1)-Cer(d18:1(4E)) + UDP-alpha-D-galactose = a neolactoside nLc4Cer(d18:1(4E)) + UDP + H(+). It catalyses the reaction 3-O-{beta-D-galactosyl-(1-&gt;3)-[6-O-sulfo-N-acetyl-beta-D-glucosaminyl-(1-&gt;6)]-N-acetyl-alpha-D-galactosaminyl}-L-seryl-[protein] + UDP-alpha-D-galactose = 3-O-{beta-D-galactosyl-(1-&gt;3)-[beta-D-galactosyl-(1-&gt;4)-6-O-sulfo-N-acetyl-beta-D-glucosaminyl-(1-&gt;6)]-N-acetyl-alpha-D-galactosaminyl}-L-seryl-[protein] + UDP + H(+). It carries out the reaction 3-O-{beta-D-galactosyl-(1-&gt;3)-[6-O-sulfo-N-acetyl-beta-D-glucosaminyl-(1-&gt;6)]-N-acetyl-alpha-D-galactosaminyl}-L-threonyl-[protein] + UDP-alpha-D-galactose = 3-O-{beta-D-galactosyl-(1-&gt;3)-[beta-D-galactosyl-(1-&gt;4)-6-O-sulfo-N-acetyl-beta-D-glucosaminyl-(1-&gt;6)]-N-acetyl-alpha-D-galactosaminyl}-L-threonyl-[protein] + UDP + H(+). It functions in the pathway protein modification; protein glycosylation. It participates in glycolipid biosynthesis. Galactose (Gal) transferase involved in the synthesis of terminal N-acetyllactosamine (LacNac) unit present on glycan chains of glycoproteins and glycosphingolipids. Catalyzes the transfer of Gal residue via a beta1-&gt;4 linkage from UDP-Gal to the non-reducing terminal N-acetyl glucosamine 6-O-sulfate (6-O-sulfoGlcNAc) in the linearly growing chain of both N- and O-linked keratan sulfate proteoglycans. Cooperates with B3GNT7 N-acetyl glucosamine transferase and CHST6 and CHST1 sulfotransferases to construct and elongate mono- and disulfated disaccharide units [-&gt;3Galbeta1-&gt;4(6-sulfoGlcNAcbeta)1-&gt;] and [-&gt;3(6-sulfoGalbeta)1-&gt;4(6-sulfoGlcNAcbeta)1-&gt;] within keratan sulfate polymer. Transfers Gal residue via a beta1-&gt;4 linkage to terminal 6-O-sulfoGlcNAc within the LacNac unit of core 2 O-glycans forming 6-sulfo-sialyl-Lewis X (sLex). May contribute to the generation of sLex epitope on mucin-type glycoproteins that serve as ligands for SELL/L-selectin, a major regulator of leukocyte migration. In the biosynthesis pathway of neolacto-series glycosphingolipids, transfers Gal residue via a beta1-&gt;4 linkage to terminal GlcNAc of a lactotriaosylceramide (Lc3Cer) acceptor to form a neolactotetraosylceramide. This is Beta-1,4-galactosyltransferase 4 (B4galt4) from Rattus norvegicus (Rat).